Here is a 73-residue protein sequence, read N- to C-terminus: Translation initiation factor IF-1 (73 aa).

Positions 1 to 73 constitute an S1-like domain; the sequence is MSKKKDVIEM…TRGRITYRYK (73 aa).

It belongs to the IF-1 family. In terms of assembly, component of the 30S ribosomal translation pre-initiation complex which assembles on the 30S ribosome in the order IF-2 and IF-3, IF-1 and N-formylmethionyl-tRNA(fMet); mRNA recruitment can occur at any time during PIC assembly.

It is found in the cytoplasm. Its function is as follows. One of the essential components for the initiation of protein synthesis. Stabilizes the binding of IF-2 and IF-3 on the 30S subunit to which N-formylmethionyl-tRNA(fMet) subsequently binds. Helps modulate mRNA selection, yielding the 30S pre-initiation complex (PIC). Upon addition of the 50S ribosomal subunit IF-1, IF-2 and IF-3 are released leaving the mature 70S translation initiation complex. The polypeptide is Translation initiation factor IF-1 (Roseiflexus castenholzii (strain DSM 13941 / HLO8)).